The primary structure comprises 570 residues: Probable D-xylulose kinase A (570 aa).

Substrate contacts are provided by His98, Asp279, and Asn280. ATP-binding positions include Trp363, 470–471, and Asn474; that span reads GG.

It belongs to the FGGY kinase family.

Its subcellular location is the cytoplasm. It catalyses the reaction D-xylulose + ATP = D-xylulose 5-phosphate + ADP + H(+). In terms of biological role, highly specific D-xylulose kinase which participates in the catabolism of xylose. Xylose is a major component of hemicelluloses such as xylan. Most fungi utilize D-xylose via three enzymatic reactions, xylose reductase (XR), xylitol dehydrogenase (XDH), and xylulokinase, to form xylulose 5-phosphate, which enters pentose phosphate pathway. This Arthroderma otae (strain ATCC MYA-4605 / CBS 113480) (Microsporum canis) protein is Probable D-xylulose kinase A (xkiA).